The following is a 340-amino-acid chain: GTP 3',8-cyclase (340 aa).

The Radical SAM core domain occupies 8 to 227 (KLGRPIRDLR…TMIEQHFEID (220 aa)). A GTP-binding site is contributed by R17. Positions 24 and 28 each coordinate [4Fe-4S] cluster. S-adenosyl-L-methionine is bound at residue Y30. C31 serves as a coordination point for [4Fe-4S] cluster. R71 contributes to the GTP binding site. Residue G75 coordinates S-adenosyl-L-methionine. A GTP-binding site is contributed by T102. S126 provides a ligand contact to S-adenosyl-L-methionine. GTP is bound at residue K163. M197 contributes to the S-adenosyl-L-methionine binding site. [4Fe-4S] cluster-binding residues include C261 and C264. Residue 266 to 268 (RAR) participates in GTP binding. C278 is a [4Fe-4S] cluster binding site.

Belongs to the radical SAM superfamily. MoaA family. Monomer and homodimer. Requires [4Fe-4S] cluster as cofactor.

It carries out the reaction GTP + AH2 + S-adenosyl-L-methionine = (8S)-3',8-cyclo-7,8-dihydroguanosine 5'-triphosphate + 5'-deoxyadenosine + L-methionine + A + H(+). Its pathway is cofactor biosynthesis; molybdopterin biosynthesis. Catalyzes the cyclization of GTP to (8S)-3',8-cyclo-7,8-dihydroguanosine 5'-triphosphate. This is GTP 3',8-cyclase from Staphylococcus aureus (strain MRSA252).